Consider the following 465-residue polypeptide: Keratin, type I cytoskeletal 13 (465 aa).

Over residues 1–28 (MNFTSFSITQGSRPQPPSTRGFSGNSFK) the composition is skewed to polar residues. Positions 1–47 (MNFTSFSITQGSRPQPPSTRGFSGNSFKSDLIPQSRRSHSVYGTPGS) are disordered. The head stretch occupies residues 1–98 (MNFTSFSITQ…SGGSDLLLGT (98 aa)). Residues 99–135 (SGKEAMQNLNDRLASYLEKVRSLEERNRELEQKIREW) form a coil 1A region. The region spanning 100-412 (GKEAMQNLND…ILLEGDEGKF (313 aa)) is the IF rod domain. Residues 136 to 154 (YEKQGAGTKTKDFSHYFKI) form a linker 1 region. Positions 155-246 (IADLQKQIHD…KSHDEEMKAL (92 aa)) are coil 1B. A linker 12 region spans residues 247–269 (RSQLGGQVNVEVDAAPAEDLTKK). The interval 270–408 (LERMRQQYEQ…RTYRILLEGD (139 aa)) is coil 2. The segment at 409–465 (EGKFQTSPHHPSIVTKQTETVVTPVVITNVKTVVEEIIDGKIVSKKEYPGPPEKLMI) is tail.

Belongs to the intermediate filament family. Heterotetramer of two type I and two type II keratins. As to expression, expressed in skin.

Its function is as follows. Type 1 keratin. May maintain oral mucosal cell homeostasis and tissue organization in response to mechanical stress. The polypeptide is Keratin, type I cytoskeletal 13 (KRT13) (Protopterus aethiopicus (Marbled lungfish)).